The chain runs to 512 residues: UDP-N-acetylmuramate--L-alanine ligase (512 aa).

Position 132–138 (132–138 (GAHGKTT)) interacts with ATP.

This sequence belongs to the MurCDEF family.

It localises to the cytoplasm. The enzyme catalyses UDP-N-acetyl-alpha-D-muramate + L-alanine + ATP = UDP-N-acetyl-alpha-D-muramoyl-L-alanine + ADP + phosphate + H(+). It participates in cell wall biogenesis; peptidoglycan biosynthesis. Its function is as follows. Cell wall formation. The chain is UDP-N-acetylmuramate--L-alanine ligase from Bifidobacterium longum subsp. infantis (strain ATCC 15697 / DSM 20088 / JCM 1222 / NCTC 11817 / S12).